The primary structure comprises 471 residues: Metal tolerance protein C1 (471 aa).

The Cytoplasmic segment spans residues 1-78 (MGIIRFQILN…PGEEGEKIFR (78 aa)). A helical transmembrane segment spans residues 79 to 99 (LGLTADIGLSVAKALTGYLCG). At 100–101 (ST) the chain is on the vacuolar side. Residues 102–122 (AIIADAAHSVSDVVLSGVALV) traverse the membrane as a helical segment. The Cytoplasmic segment spans residues 123–144 (SYRAANVPKDKEHPYGHGKFET). The helical transmembrane segment at 145–165 (LGALGISAMLLATGSGIAWHA) threads the bilayer. Topologically, residues 166–192 (LDLLSIALSAAPEVIHSGHHHGIDMNH) are vacuolar. A helical transmembrane segment spans residues 193–213 (PILALTVTIASISIKEGLYWI). The Cytoplasmic segment spans residues 214-236 (TKRAGEKQGSGLMMANAWHHRSD). The helical transmembrane segment at 237–257 (AISSLVALVGVGGSILGVNFL) threads the bilayer. Over 258–423 (DPLAGLVVST…RITPHLLHSK (166 aa)) the chain is Vacuolar. A helical transmembrane segment spans residues 424–444 (ILLQIVVAMPSTMSIQDVMIA). Topologically, residues 445-471 (AEHAEKEILKAAPNVARVSIQLSLNSE) are cytoplasmic.

Belongs to the cation diffusion facilitator (CDF) transporter (TC 2.A.4) family.

It is found in the vacuole membrane. In terms of biological role, involved in sequestration of excess metal in the cytoplasm into vacuoles to maintain metal homeostasis. This Arabidopsis thaliana (Mouse-ear cress) protein is Metal tolerance protein C1 (MTPC1).